A 428-amino-acid chain; its full sequence is Enolase (428 aa).

Gln162 is a (2R)-2-phosphoglycerate binding site. Glu204 serves as the catalytic Proton donor. 3 residues coordinate Mg(2+): Asp241, Glu282, and Asp309. Residues Lys334, Arg363, Ser364, and Lys385 each coordinate (2R)-2-phosphoglycerate. The active-site Proton acceptor is the Lys334.

Belongs to the enolase family. Requires Mg(2+) as cofactor.

Its subcellular location is the cytoplasm. It localises to the secreted. The protein resides in the cell surface. The catalysed reaction is (2R)-2-phosphoglycerate = phosphoenolpyruvate + H2O. It participates in carbohydrate degradation; glycolysis; pyruvate from D-glyceraldehyde 3-phosphate: step 4/5. Its function is as follows. Catalyzes the reversible conversion of 2-phosphoglycerate (2-PG) into phosphoenolpyruvate (PEP). It is essential for the degradation of carbohydrates via glycolysis. This is Enolase from Mycobacterium marinum (strain ATCC BAA-535 / M).